The primary structure comprises 711 residues: Long-chain-fatty-acid--CoA ligase 4 (711 aa).

A helical; Signal-anchor for type III membrane protein transmembrane segment spans residues 8 to 28; it reads LTIVLLPVHLLITIYSALIFI. The Cytoplasmic portion of the chain corresponds to 29-711; sequence PWYFLTNAKK…KDIERMYGGK (683 aa). S447 carries the post-translational modification Phosphoserine.

The protein belongs to the ATP-dependent AMP-binding enzyme family. The cofactor is Mg(2+).

It localises to the mitochondrion outer membrane. The protein localises to the peroxisome membrane. It is found in the microsome membrane. The protein resides in the endoplasmic reticulum membrane. Its subcellular location is the cell membrane. The catalysed reaction is a long-chain fatty acid + ATP + CoA = a long-chain fatty acyl-CoA + AMP + diphosphate. It catalyses the reaction (5Z,8Z,11Z,14Z)-eicosatetraenoate + ATP + CoA = (5Z,8Z,11Z,14Z)-eicosatetraenoyl-CoA + AMP + diphosphate. It carries out the reaction 15-hydroxy-(5Z,8Z,11Z,13E)-eicosatetraenoate + ATP + CoA = 15-hydroxy-(5Z,8Z,11Z,13E)-eicosatetraenoyl-CoA + AMP + diphosphate. The enzyme catalyses 12-hydroxy-(5Z,8Z,10E,14Z)-eicosatetraenoate + ATP + CoA = 12-hydroxy-(5Z,8Z,10E,14Z)-eicosatetraenoyl-CoA + AMP + diphosphate. The catalysed reaction is 5-hydroxy-(6E,8Z,11Z,14Z)-eicosatetraenoate + ATP + CoA = 5-hydroxy-(6E,8Z,11Z,14Z)-eicosatetraenoyl-CoA + AMP + diphosphate. It catalyses the reaction 5,6-epoxy-(8Z,11Z,14Z)-eicosatrienoate + ATP + CoA = 5,6-epoxy-(8Z,11Z,14Z)-eicosatrienoyl-CoA + AMP + diphosphate. It carries out the reaction 14,15-epoxy-(5Z,8Z,11Z)-eicosatrienoate + ATP + CoA = 14,15-epoxy-(5Z,8Z,11Z)-eicosatrienoyl-CoA + AMP + diphosphate. The enzyme catalyses 11,12-epoxy-(5Z,8Z,14Z)-eicosatrienoate + ATP + CoA = 11,12-epoxy-(5Z,8Z,14Z)-eicosatrienoyl-CoA + AMP + diphosphate. The catalysed reaction is 8,9-epoxy-(5Z,11Z,14Z)-eicosatrienoate + ATP + CoA = 8,9-epoxy-(5Z,11Z,14Z)-eicosatrienoyl-CoA + AMP + diphosphate. It catalyses the reaction hexadecanoate + ATP + CoA = hexadecanoyl-CoA + AMP + diphosphate. It carries out the reaction (E)-hexadec-2-enoate + ATP + CoA = (2E)-hexadecenoyl-CoA + AMP + diphosphate. Its activity is regulated as follows. Both triacsin C and rosiglitazone inhibit arachidonoyl-CoA ligase activity. Catalyzes the conversion of long-chain fatty acids to their active form acyl-CoA for both synthesis of cellular lipids, and degradation via beta-oxidation. Preferentially activates arachidonate and eicosapentaenoate as substrates. Preferentially activates 8,9-EET &gt; 14,15-EET &gt; 5,6-EET &gt; 11,12-EET. Modulates glucose-stimulated insulin secretion by regulating the levels of unesterified EETs. Modulates prostaglandin E2 secretion. The chain is Long-chain-fatty-acid--CoA ligase 4 (Acsl4) from Rattus norvegicus (Rat).